Consider the following 647-residue polypeptide: Threonine--tRNA ligase (647 aa).

A TGS domain is found at 1–61; that stretch reads MIKITFPDGA…EEDGSIEIVT (61 aa). The catalytic stretch occupies residues 240-538; it reads DHRKLGKELD…LIETYKGAFP (299 aa). Cysteine 334, histidine 385, and histidine 515 together coordinate Zn(2+).

It belongs to the class-II aminoacyl-tRNA synthetase family. As to quaternary structure, homodimer. Requires Zn(2+) as cofactor.

It localises to the cytoplasm. The catalysed reaction is tRNA(Thr) + L-threonine + ATP = L-threonyl-tRNA(Thr) + AMP + diphosphate + H(+). Catalyzes the attachment of threonine to tRNA(Thr) in a two-step reaction: L-threonine is first activated by ATP to form Thr-AMP and then transferred to the acceptor end of tRNA(Thr). Also edits incorrectly charged L-seryl-tRNA(Thr). This Streptococcus agalactiae serotype III (strain NEM316) protein is Threonine--tRNA ligase.